The chain runs to 400 residues: Acetate kinase (400 aa).

Residue N10 coordinates Mg(2+). Position 17 (K17) interacts with ATP. Residue R91 coordinates substrate. D150 functions as the Proton donor/acceptor in the catalytic mechanism. ATP contacts are provided by residues 210–214, 285–287, and 333–337; these read HLGNG, DCR, and GIGEN. E387 serves as a coordination point for Mg(2+).

Belongs to the acetokinase family. Homodimer. Requires Mg(2+) as cofactor. The cofactor is Mn(2+).

It is found in the cytoplasm. The catalysed reaction is acetate + ATP = acetyl phosphate + ADP. It participates in metabolic intermediate biosynthesis; acetyl-CoA biosynthesis; acetyl-CoA from acetate: step 1/2. Its function is as follows. Catalyzes the formation of acetyl phosphate from acetate and ATP. Can also catalyze the reverse reaction. This chain is Acetate kinase, found in Pectobacterium atrosepticum (strain SCRI 1043 / ATCC BAA-672) (Erwinia carotovora subsp. atroseptica).